The sequence spans 195 residues: ATP-dependent Clp protease proteolytic subunit (195 aa).

The active-site Nucleophile is the Ser98. The active site involves His123.

Belongs to the peptidase S14 family. As to quaternary structure, fourteen ClpP subunits assemble into 2 heptameric rings which stack back to back to give a disk-like structure with a central cavity, resembling the structure of eukaryotic proteasomes.

Its subcellular location is the cytoplasm. It catalyses the reaction Hydrolysis of proteins to small peptides in the presence of ATP and magnesium. alpha-casein is the usual test substrate. In the absence of ATP, only oligopeptides shorter than five residues are hydrolyzed (such as succinyl-Leu-Tyr-|-NHMec, and Leu-Tyr-Leu-|-Tyr-Trp, in which cleavage of the -Tyr-|-Leu- and -Tyr-|-Trp bonds also occurs).. Functionally, cleaves peptides in various proteins in a process that requires ATP hydrolysis. Has a chymotrypsin-like activity. Plays a major role in the degradation of misfolded proteins. This chain is ATP-dependent Clp protease proteolytic subunit, found in Caldanaerobacter subterraneus subsp. tengcongensis (strain DSM 15242 / JCM 11007 / NBRC 100824 / MB4) (Thermoanaerobacter tengcongensis).